A 260-amino-acid chain; its full sequence is Protein-L-isoaspartate O-methyltransferase (260 aa).

Positions 1–27 are disordered; the sequence is MKSPVAGAVLDPSTPPPTTGTSWRWPG. The active site involves S92.

Belongs to the methyltransferase superfamily. L-isoaspartyl/D-aspartyl protein methyltransferase family.

It localises to the cytoplasm. It carries out the reaction [protein]-L-isoaspartate + S-adenosyl-L-methionine = [protein]-L-isoaspartate alpha-methyl ester + S-adenosyl-L-homocysteine. Catalyzes the methyl esterification of L-isoaspartyl residues in peptides and proteins that result from spontaneous decomposition of normal L-aspartyl and L-asparaginyl residues. It plays a role in the repair and/or degradation of damaged proteins. This chain is Protein-L-isoaspartate O-methyltransferase (pcm), found in Aeropyrum pernix (strain ATCC 700893 / DSM 11879 / JCM 9820 / NBRC 100138 / K1).